Consider the following 371-residue polypeptide: Transcription factor bHLH77 (371 aa).

Disordered stretches follow at residues 1–25 (MNMD…FGNG), 65–206 (SGGI…SLAE), and 352–371 (QSNN…KLEP). Over residues 85 to 96 (SQPTTQESNKSS) the composition is skewed to polar residues. Positions 128–142 (SPASSSLTASNSKVS) are enriched in low complexity. Basic and acidic residues predominate over residues 165–190 (GVEKCDSKGDNKDDAKPPEAPKDYIH). Residues 197-247 (QATDSHSLAERARREKISERMTLLQDLVPGCNRITGKAVMLDEIINYVQSL) enclose the bHLH domain.

In terms of assembly, homodimer. Interacts with IBH1. In terms of tissue distribution, expressed constitutively in roots, leaves, stems, and flowers.

It localises to the nucleus. The protein is Transcription factor bHLH77 (BHLH77) of Arabidopsis thaliana (Mouse-ear cress).